Here is a 247-residue protein sequence, read N- to C-terminus: Cell division protein ZapD (247 aa).

It belongs to the ZapD family. As to quaternary structure, interacts with FtsZ.

It localises to the cytoplasm. Cell division factor that enhances FtsZ-ring assembly. Directly interacts with FtsZ and promotes bundling of FtsZ protofilaments, with a reduction in FtsZ GTPase activity. The polypeptide is Cell division protein ZapD (Enterobacter sp. (strain 638)).